Consider the following 211-residue polypeptide: MDLERGSKTPPSSAPAAAAATTTTSTCCSNKRPQLRDRLVALQPVVLRAAATLATAVAAAVMALNAQSYTAVVAIVGTRPLTQTFTTKFRDTPAFVYFVIANAIAAVYNLVMLLFRCLILRRRMAGLVVHMLDMVIMALLATGAATAAAMAELGKNGNVHARWNPICDRFGSFCSRGGVALASSFTGVALMLALNLLSAASNAQCSPGQYE.

A disordered region spans residues 1–29; sequence MDLERGSKTPPSSAPAAAAATTTTSTCCS. At 1–55 the chain is on the cytoplasmic side; sequence MDLERGSKTPPSSAPAAAAATTTTSTCCSNKRPQLRDRLVALQPVVLRAAATLAT. Positions 9–26 are enriched in low complexity; sequence TPPSSAPAAAAATTTTST. The helical transmembrane segment at 56-76 threads the bilayer; sequence AVAAAVMALNAQSYTAVVAIV. Residues 77–94 are Extracellular-facing; it reads GTRPLTQTFTTKFRDTPA. A helical transmembrane segment spans residues 95-115; sequence FVYFVIANAIAAVYNLVMLLF. At 116-123 the chain is on the cytoplasmic side; it reads RCLILRRR. Residues 124–144 form a helical membrane-spanning segment; sequence MAGLVVHMLDMVIMALLATGA. The Extracellular portion of the chain corresponds to 145-176; sequence ATAAAMAELGKNGNVHARWNPICDRFGSFCSR. The chain crosses the membrane as a helical span at residues 177-197; sequence GGVALASSFTGVALMLALNLL. Residues 198–211 are Cytoplasmic-facing; that stretch reads SAASNAQCSPGQYE.

The protein belongs to the Casparian strip membrane proteins (CASP) family. In terms of assembly, homodimer and heterodimers.

The protein localises to the cell membrane. This Sorghum bicolor (Sorghum) protein is CASP-like protein 1B1.